The sequence spans 269 residues: 3-ketodihydrosphingosine reductase (269 aa).

NADPH-binding residues include Gly-10, Ser-12, Ser-13, Gly-14, Lys-36, and Asp-50. A GXSXG motif is present at residues 10–14; that stretch reads GASSG. Ser-12 serves as the catalytic Nucleophile; for lipase activity. Residue Ser-128 is the Proton donor of the active site. The active-site Proton acceptor is the Tyr-142. Residues Tyr-142 and Lys-146 each coordinate NADP(+). Residues 142 to 146 and 175 to 177 contribute to the NADPH site; these read YSASK and FNT. The active site involves Lys-146. Residue Lys-146 is the Lowers pKa of active site Tyr of the active site.

The protein belongs to the short-chain dehydrogenases/reductases (SDR) family.

The catalysed reaction is sphinganine + NADP(+) = 3-oxosphinganine + NADPH + H(+). It participates in lipid metabolism; sphingolipid metabolism. In terms of biological role, catalyzes the reduction of 3'-oxosphinganine (3-ketodihydrosphingosine/KDS) to sphinganine (dihydrosphingosine/DHS), the second step of de novo sphingolipid biosynthesis. The polypeptide is 3-ketodihydrosphingosine reductase (Bacteroides thetaiotaomicron (strain ATCC 29148 / DSM 2079 / JCM 5827 / CCUG 10774 / NCTC 10582 / VPI-5482 / E50)).